Consider the following 360-residue polypeptide: Peptide chain release factor 1 (360 aa).

Q233 is modified (N5-methylglutamine). Positions K283–I305 are disordered.

Belongs to the prokaryotic/mitochondrial release factor family. Post-translationally, methylated by PrmC. Methylation increases the termination efficiency of RF1.

The protein resides in the cytoplasm. Its function is as follows. Peptide chain release factor 1 directs the termination of translation in response to the peptide chain termination codons UAG and UAA. The polypeptide is Peptide chain release factor 1 (Methylocella silvestris (strain DSM 15510 / CIP 108128 / LMG 27833 / NCIMB 13906 / BL2)).